Here is a 263-residue protein sequence, read N- to C-terminus: MWELRSASFWRAIFAEFFATLFYVFFGLGASLRWTPGPLHVLQVALAFGLALATLVQAVGHISGAHVNPAVTFAFLVGSQMSLLRAFCYMAAQLLGAVAGAAVLYSVTPPAVRGNLALNTLHPGVSVGQATTVEIFLTLQFVLCIFATYDERRNGRLGSVALAVGFSLTLGHLFGMYYTGAGMNPARSFAPAILTRNFTNHWVYWVGPIIGGGLGSLLYDFLLFPRLKSVSERLSILKGARPSDSNGQPEGTGEPVELKTQAL.

Residues 1–9 (MWELRSASF) lie on the Cytoplasmic side of the membrane. A helical transmembrane segment spans residues 10 to 29 (WRAIFAEFFATLFYVFFGLG). The Extracellular segment spans residues 30 to 41 (ASLRWTPGPLHV). A helical transmembrane segment spans residues 42-59 (LQVALAFGLALATLVQAV). Residues 60 to 61 (GH) are Cytoplasmic-facing. The segment at residues 62-77 (ISGAHVNPAVTFAFLV) is an intramembrane region (discontinuously helical). The short motif at 68 to 70 (NPA) is the NPA 1 element. Topologically, residues 78-82 (GSQMS) are cytoplasmic. Residues 83-106 (LLRAFCYMAAQLLGAVAGAAVLYS) form a helical membrane-spanning segment. At 107 to 127 (VTPPAVRGNLALNTLHPGVSV) the chain is on the extracellular side. Residues 128–148 (GQATTVEIFLTLQFVLCIFAT) form a helical membrane-spanning segment. Topologically, residues 149-156 (YDERRNGR) are cytoplasmic. A helical membrane pass occupies residues 157-175 (LGSVALAVGFSLTLGHLFG). Residues 176–178 (MYY) lie on the Extracellular side of the membrane. An intramembrane region (discontinuously helical) is located at residues 179 to 193 (TGAGMNPARSFAPAI). An NPA 2 motif is present at residues 184–186 (NPA). At 194-200 (LTRNFTN) the chain is on the extracellular side. Residues 201 to 222 (HWVYWVGPIIGGGLGSLLYDFL) form a helical membrane-spanning segment. At 223–263 (LFPRLKSVSERLSILKGARPSDSNGQPEGTGEPVELKTQAL) the chain is on the cytoplasmic side. The segment at 227–237 (LKSVSERLSIL) is interaction with CALM. A phosphoserine mark is found at S235, S243, and S245. Positions 240-263 (ARPSDSNGQPEGTGEPVELKTQAL) are disordered. The residue at position 246 (N246) is a Deamidated asparagine.

It belongs to the MIP/aquaporin (TC 1.A.8) family. Homotetramer; each monomer provides an independent water pore. Two homotetramers on opposing membranes can dimerize, forming a cell-cell junction. Interacts with CALM; the calcium-calmodulin/CALM complex interacts with the cytoplasmic domains of two aquaporins, leading to channel closure. Interacts with BFSP1 (via C-terminus); prevents calcium-dependent inhibition of the water channel activity. Post-translationally, subject to partial proteolytic cleavage in the eye lens core. Partial proteolysis promotes interactions between tetramers from adjoining membranes. Fatty acylated at Met-1 and Lys-238. The acyl modifications, in decreasing order of ion abundance, are: oleoyl (C18:1) &gt; palmitoyl (C16:0) &gt; stearoyl (C18:0) &gt; eicosenoyl (C20:1) &gt; dihomo-gamma-linolenoyl (C20:3) &gt; palmitoleoyl (C16:1) &gt; eicosadienoyl (C20:2).

It is found in the cell membrane. The protein localises to the cell junction. The catalysed reaction is H2O(in) = H2O(out). Its activity is regulated as follows. The water channel activity is inhibited by calcium through calmodulin/CALM. Its function is as follows. Aquaporins form homotetrameric transmembrane channels, with each monomer independently mediating water transport across the plasma membrane along its osmotic gradient. Specifically expressed in lens fiber cells, this aquaporin is crucial for maintaining lens water homeostasis and transparency. Beyond water permeability, it also acts as a cell-to-cell adhesion molecule, forming thin junctions between lens fiber cells that are essential for maintaining the ordered structure and transparency of the lens. This is Lens fiber major intrinsic protein from Canis lupus familiaris (Dog).